The sequence spans 259 residues: HTH-type transcriptional regulator TtgV (259 aa).

The region spanning 14-76 (IQVIARAASI…GPAGGFRLGP (63 aa)) is the HTH iclR-type domain. The H-T-H motif DNA-binding region spans 36 to 59 (LAAIAQLVGLPRSTVQRIINALEE). One can recognise an IclR-ED domain in the interval 89–253 (ILSLVKPYLR…KLNIERAIGR (165 aa)).

Functionally, represses the expression of the ttgGHI and ttgVW operons. Binds to the ttgGHI / ttgVW intergenic region, probably preventing binding of RNA polymerase; ttgV dissociates from this region in the presence of 1-hexanol. In Pseudomonas putida (strain DOT-T1E), this protein is HTH-type transcriptional regulator TtgV (ttgV).